The primary structure comprises 164 residues: Small ribosomal subunit protein uS5 (164 aa).

Positions 10–73 constitute an S5 DRBM domain; that stretch reads LEERVVAVNR…DDAKKNLIEV (64 aa).

Belongs to the universal ribosomal protein uS5 family. In terms of assembly, part of the 30S ribosomal subunit. Contacts proteins S4 and S8.

Functionally, with S4 and S12 plays an important role in translational accuracy. In terms of biological role, located at the back of the 30S subunit body where it stabilizes the conformation of the head with respect to the body. This Streptococcus pneumoniae serotype 2 (strain D39 / NCTC 7466) protein is Small ribosomal subunit protein uS5.